The primary structure comprises 689 residues: Glycine--tRNA ligase beta subunit (689 aa).

The protein belongs to the class-II aminoacyl-tRNA synthetase family. As to quaternary structure, tetramer of two alpha and two beta subunits.

It localises to the cytoplasm. It carries out the reaction tRNA(Gly) + glycine + ATP = glycyl-tRNA(Gly) + AMP + diphosphate. In Erwinia tasmaniensis (strain DSM 17950 / CFBP 7177 / CIP 109463 / NCPPB 4357 / Et1/99), this protein is Glycine--tRNA ligase beta subunit.